We begin with the raw amino-acid sequence, 166 residues long: Thioredoxin, mitochondrial (166 aa).

Residues 1–59 constitute a mitochondrion transit peptide; sequence MAQRLLLRRFLTSVISRKPPQGVWASLTSTSLQTPPYNAGGLTGTPSPARTFHTTRVCS. The Thioredoxin domain maps to 61–166; it reads TFNVQDGPDF…LEAFLKKLIG (106 aa). Residues Cys90 and Cys93 each act as nucleophile in the active site. A disulfide bridge connects residues Cys90 and Cys93. Position 152 is an N6-acetyllysine; alternate (Lys152). Position 152 is an N6-succinyllysine; alternate (Lys152).

The protein belongs to the thioredoxin family. In terms of assembly, monomer. Expressed in several tissues with the highest expression levels in heart, muscle, kidney and adrenal gland.

It is found in the mitochondrion. Important for the control of mitochondrial reactive oxygen species homeostasis, apoptosis regulation and cell viability. Is involved in various redox reactions including the reduction of protein disulfide bonds, through the reversible oxidation of its active center dithiol to a disulfide. This Rattus norvegicus (Rat) protein is Thioredoxin, mitochondrial (Txn2).